A 198-amino-acid polypeptide reads, in one-letter code: Recombination protein RecR (198 aa).

Residues 58–73 (CSVCGNFTDKDPCAIC) form a C4-type zinc finger. One can recognise a Toprim domain in the interval 81 to 175 (NTICVVEHPK…KVTRIAHGIP (95 aa)).

Belongs to the RecR family.

In terms of biological role, may play a role in DNA repair. It seems to be involved in an RecBC-independent recombinational process of DNA repair. It may act with RecF and RecO. This chain is Recombination protein RecR, found in Clostridium tetani (strain Massachusetts / E88).